We begin with the raw amino-acid sequence, 252 residues long: 3-dehydroquinate dehydratase (252 aa).

Residues 46-48 (EWR) and Arg82 contribute to the 3-dehydroquinate site. The active-site Proton donor/acceptor is the His143. Lys170 acts as the Schiff-base intermediate with substrate in catalysis. 3-dehydroquinate contacts are provided by Arg212, Ser231, and Gln235.

The protein belongs to the type-I 3-dehydroquinase family. As to quaternary structure, homodimer.

It carries out the reaction 3-dehydroquinate = 3-dehydroshikimate + H2O. It functions in the pathway metabolic intermediate biosynthesis; chorismate biosynthesis; chorismate from D-erythrose 4-phosphate and phosphoenolpyruvate: step 3/7. Its function is as follows. Involved in the third step of the chorismate pathway, which leads to the biosynthesis of aromatic amino acids. Catalyzes the cis-dehydration of 3-dehydroquinate (DHQ) and introduces the first double bond of the aromatic ring to yield 3-dehydroshikimate. This chain is 3-dehydroquinate dehydratase, found in Listeria innocua serovar 6a (strain ATCC BAA-680 / CLIP 11262).